Consider the following 288-residue polypeptide: Bifunctional protein FolD (288 aa).

NADP(+) is bound by residues 166-168 (GRS), serine 191, and valine 232.

The protein belongs to the tetrahydrofolate dehydrogenase/cyclohydrolase family. Homodimer.

The enzyme catalyses (6R)-5,10-methylene-5,6,7,8-tetrahydrofolate + NADP(+) = (6R)-5,10-methenyltetrahydrofolate + NADPH. It carries out the reaction (6R)-5,10-methenyltetrahydrofolate + H2O = (6R)-10-formyltetrahydrofolate + H(+). It participates in one-carbon metabolism; tetrahydrofolate interconversion. Catalyzes the oxidation of 5,10-methylenetetrahydrofolate to 5,10-methenyltetrahydrofolate and then the hydrolysis of 5,10-methenyltetrahydrofolate to 10-formyltetrahydrofolate. This is Bifunctional protein FolD from Roseiflexus sp. (strain RS-1).